The chain runs to 463 residues: Probable Xaa-Pro aminopeptidase PEPP (463 aa).

Mn(2+) is bound by residues D259, D270, E393, and E433.

It belongs to the peptidase M24B family. Mn(2+) is required as a cofactor.

It carries out the reaction Release of any N-terminal amino acid, including proline, that is linked to proline, even from a dipeptide or tripeptide.. Catalyzes the removal of a penultimate prolyl residue from the N-termini of peptides. The chain is Probable Xaa-Pro aminopeptidase PEPP (PEPP) from Phaeosphaeria nodorum (strain SN15 / ATCC MYA-4574 / FGSC 10173) (Glume blotch fungus).